Reading from the N-terminus, the 311-residue chain is Protoheme IX farnesyltransferase (311 aa).

9 helical membrane passes run 32–52 (VMSL…VVVD), 53–73 (PLYG…AGAL), 98–118 (ISRG…VFLM), 120–140 (VLIN…YIVI), 153–173 (IVIG…AATG), 180–200 (FLLF…LCLF), 226–246 (ILVY…TGYA), 248–268 (IIYG…AYRL), and 285–305 (FFFS…EFLI).

This sequence belongs to the UbiA prenyltransferase family. Protoheme IX farnesyltransferase subfamily.

It is found in the cell inner membrane. The catalysed reaction is heme b + (2E,6E)-farnesyl diphosphate + H2O = Fe(II)-heme o + diphosphate. Its pathway is porphyrin-containing compound metabolism; heme O biosynthesis; heme O from protoheme: step 1/1. Its function is as follows. Converts heme B (protoheme IX) to heme O by substitution of the vinyl group on carbon 2 of heme B porphyrin ring with a hydroxyethyl farnesyl side group. This is Protoheme IX farnesyltransferase from Bartonella bacilliformis (strain ATCC 35685 / KC583 / Herrer 020/F12,63).